Here is a 563-residue protein sequence, read N- to C-terminus: Inclusion membrane protein M (563 aa).

The Cytoplasmic segment spans residues 1 to 36 (MVYFRAHQPRHTPKTFPLEVHHSFSDKHPQIAKAMR). The chain crosses the membrane as a helical span at residues 37 to 57 (ITGIALAALSLLAVVACVIAV). Serine 58 is a topological domain (vacuolar). The chain crosses the membrane as a helical span at residues 59–79 (AGGAAIPLAVISGIAVMSGLL). The Cytoplasmic segment spans residues 80-252 (SAATIICSAK…VLKVALSLGV (173 aa)). Residues 253–273 (LAGVAALIIFLPPSLPFIAVI) traverse the membrane as a helical segment. Glycine 274 is a topological domain (vacuolar). The chain crosses the membrane as a helical span at residues 275-295 (VSSLALGMASFLMIRGIKYLL). Topologically, residues 296–563 (EHSPLNRKQL…QLAQYLLDNH (268 aa)) are cytoplasmic.

The protein belongs to the chlamydial CPn_0065/CT_288/TC_0561 family. In terms of assembly, interacts with host CCDC146. In host cells infected with C.trachomatis incM, CCDC146 is recruited to the periphery of the pathogen-containing vacuole but recruitment is not dependent on incM.

The protein resides in the host vacuole. The protein localises to the host pathogen-containing vacuole. It localises to the host pathogen-containing vacuole membrane. It is found in the host pathogen-containing vacuole lumen. Its subcellular location is the secreted. Functionally, interferes with host cell cytokinesis, centrosome positioning and Golgi distribution, and contributes to the morphology and stability of the pathogen-containing vacuole. May exert its effects by acting directly or indirectly on host microtubules. This is Inclusion membrane protein M from Chlamydia trachomatis serovar D (strain ATCC VR-885 / DSM 19411 / UW-3/Cx).